The sequence spans 873 residues: Leucine--tRNA ligase (873 aa).

The 'HIGH' region motif lies at 42 to 52 (PYPSGKLHMGH). Residues 628 to 632 (KMSKS) carry the 'KMSKS' region motif. K631 lines the ATP pocket.

The protein belongs to the class-I aminoacyl-tRNA synthetase family.

Its subcellular location is the cytoplasm. It catalyses the reaction tRNA(Leu) + L-leucine + ATP = L-leucyl-tRNA(Leu) + AMP + diphosphate. The polypeptide is Leucine--tRNA ligase (Azoarcus sp. (strain BH72)).